The following is a 332-amino-acid chain: L-lactate dehydrogenase A chain (332 aa).

At alanine 2 the chain carries N-acetylalanine. Lysine 5 is subject to N6-acetyllysine; alternate. The residue at position 5 (lysine 5) is an N6-succinyllysine; alternate. The residue at position 14 (lysine 14) is an N6-acetyllysine. 29-57 (GAVGMACAISILMKDLADELALVDVIEDK) contributes to the NAD(+) binding site. Position 57 is an N6-acetyllysine; alternate (lysine 57). Residue lysine 57 forms a Glycyl lysine isopeptide (Lys-Gly) (interchain with G-Cter in SUMO2); alternate linkage. N6-acetyllysine is present on lysine 81. Residue arginine 99 participates in NAD(+) binding. Residue arginine 106 participates in substrate binding. At lysine 118 the chain carries N6-acetyllysine; alternate. Lysine 118 carries the N6-succinyllysine; alternate modification. The residue at position 126 (lysine 126) is an N6-acetyllysine. Asparagine 138 is a binding site for NAD(+). The substrate site is built by asparagine 138 and arginine 169. Residue histidine 193 is the Proton acceptor of the active site. Residue serine 213 is modified to Phosphoserine. An N6-acetyllysine mark is found at lysine 224 and lysine 232. A Phosphotyrosine modification is found at tyrosine 239. Lysine 243 carries the post-translational modification N6-acetyllysine. Residue threonine 248 coordinates substrate. Threonine 309 is modified (phosphothreonine). Lysine 318 is modified (N6-acetyllysine; alternate). Lysine 318 is subject to N6-succinyllysine; alternate. Position 322 is a phosphothreonine (threonine 322).

The protein belongs to the LDH/MDH superfamily. LDH family. As to quaternary structure, homotetramer. Interacts with PTEN upstream reading frame protein MP31. ISGylated.

It is found in the cytoplasm. It catalyses the reaction (S)-lactate + NAD(+) = pyruvate + NADH + H(+). It participates in fermentation; pyruvate fermentation to lactate; (S)-lactate from pyruvate: step 1/1. Functionally, interconverts simultaneously and stereospecifically pyruvate and lactate with concomitant interconversion of NADH and NAD(+). The polypeptide is L-lactate dehydrogenase A chain (Ldha) (Rattus norvegicus (Rat)).